The following is a 568-amino-acid chain: O-fucosyltransferase 9 (568 aa).

The span at 1 to 19 (MHGLSRLGNGSSNGRINIP) shows a compositional bias: low complexity. The segment at 1-33 (MHGLSRLGNGSSNGRINIPSPSPPSSPRIRHTR) is disordered. Residues 65 to 85 (LLLAPLLYIAGMLLFMGSFGF) form a helical; Signal-anchor for type II membrane protein membrane-spanning segment. Asparagine 125, asparagine 151, asparagine 189, and asparagine 243 each carry an N-linked (GlcNAc...) asparagine glycan. 336–338 (HLR) is a binding site for substrate. Asparagine 408 and asparagine 409 each carry an N-linked (GlcNAc...) asparagine glycan.

It belongs to the glycosyltransferase GT106 family.

Its subcellular location is the membrane. It functions in the pathway glycan metabolism. The polypeptide is O-fucosyltransferase 9 (Arabidopsis thaliana (Mouse-ear cress)).